A 211-amino-acid chain; its full sequence is Peroxiredoxin (211 aa).

The region spanning 2–156 is the Thioredoxin domain; sequence PLLGDDFPEL…ILRAVKVLQI (155 aa). Cys-44 serves as the catalytic Cysteine sulfenic acid (-SOH) intermediate. Arg-119 contacts substrate. Cys-199 and Cys-205 are oxidised to a cystine.

Belongs to the peroxiredoxin family. Prx6 subfamily. Homodecamer. Pentamer of dimers that assemble into a ring structure.

The protein resides in the cytoplasm. The catalysed reaction is a hydroperoxide + [thioredoxin]-dithiol = an alcohol + [thioredoxin]-disulfide + H2O. Functionally, thiol-specific peroxidase that catalyzes the reduction of hydrogen peroxide and organic hydroperoxides to water and alcohols, respectively. Plays a role in cell protection against oxidative stress by detoxifying peroxides. This chain is Peroxiredoxin, found in Chlorobaculum tepidum (strain ATCC 49652 / DSM 12025 / NBRC 103806 / TLS) (Chlorobium tepidum).